Reading from the N-terminus, the 323-residue chain is tRNA-dihydrouridine synthase B (323 aa).

FMN is bound by residues 16–18 (PMA) and Q70. Residue C100 is the Proton donor of the active site. FMN-binding positions include K139, 200–202 (NGD), and 224–225 (GR).

It belongs to the Dus family. DusB subfamily. FMN serves as cofactor.

It catalyses the reaction a 5,6-dihydrouridine in tRNA + NAD(+) = a uridine in tRNA + NADH + H(+). The catalysed reaction is a 5,6-dihydrouridine in tRNA + NADP(+) = a uridine in tRNA + NADPH + H(+). In terms of biological role, catalyzes the synthesis of 5,6-dihydrouridine (D), a modified base found in the D-loop of most tRNAs, via the reduction of the C5-C6 double bond in target uridines. The polypeptide is tRNA-dihydrouridine synthase B (Proteus vulgaris).